Here is a 197-residue protein sequence, read N- to C-terminus: Female-specific protein transformer (197 aa).

2 stretches are compositionally biased toward basic and acidic residues: residues Met1 to Gly17 and Arg24 to Lys39. Disordered regions lie at residues Met1–Ile136 and Gly158–Tyr197. Composition is skewed to basic residues over residues Arg58–Ser75 and Ser84–His127. Over residues Pro163–Pro172 the composition is skewed to pro residues.

The protein resides in the nucleus speckle. Functionally, member of the regulatory pathway controlling female somatic sexual differentiation, regulated by Sxl. Activates dsx female-specific splicing by promoting the formation of a splicing enhancer complex which consists of tra, tra2 and sr proteins. Together with tra-2, plays a role in switching fru splicing from the male-specific pattern to the female-specific pattern through activation of the female-specific fru 5'-splice site. No known function in males. The sequence is that of Female-specific protein transformer (tra) from Drosophila melanogaster (Fruit fly).